The primary structure comprises 220 residues: MSSNSTPEKVTAEHVLWYIPNKIGYVRVITAALSFFVMKNHPTAFTWLYSTSCLLDALDGTMARKYNQVSSLGAVLDMVTDRSSTAGLMCFLCVQYPQWCVFFQLMLGLDITSHYMHMYASLSAGKTSHKSVGEGESRLLHLYYTRRDVLFTICAFNELFYAGLYLQLFSNSATFGKWTTIISFPGYVFKQTANVVQLKRAALILADNDAKNANEKNKTY.

The Cytoplasmic portion of the chain corresponds to 1 to 20; that stretch reads MSSNSTPEKVTAEHVLWYIP. A helical transmembrane segment spans residues 21–41; sequence NKIGYVRVITAALSFFVMKNH. Residues 42–45 lie on the Lumenal side of the membrane; sequence PTAF. A helical transmembrane segment spans residues 46 to 66; it reads TWLYSTSCLLDALDGTMARKY. 2 residues coordinate Mg(2+): Asp56 and Asp59. Residues Gly60, Arg64, and Ser70 each coordinate a CDP-1,2-diacyl-sn-glycerol. Over 67-75 the chain is Cytoplasmic; sequence NQVSSLGAV. The chain crosses the membrane as a helical span at residues 76-96; it reads LDMVTDRSSTAGLMCFLCVQY. Mg(2+) is bound by residues Asp77 and Asp81. Catalysis depends on Asp81, which acts as the Proton acceptor. The Lumenal portion of the chain corresponds to 97–98; the sequence is PQ. The chain crosses the membrane as a helical span at residues 99–119; sequence WCVFFQLMLGLDITSHYMHMY. The Cytoplasmic portion of the chain corresponds to 120–145; it reads ASLSAGKTSHKSVGEGESRLLHLYYT. Residues 146-166 traverse the membrane as a helical segment; that stretch reads RRDVLFTICAFNELFYAGLYL. Over 167-170 the chain is Lumenal; that stretch reads QLFS. The helical transmembrane segment at 171-191 threads the bilayer; sequence NSATFGKWTTIISFPGYVFKQ. Residues 192 to 220 lie on the Cytoplasmic side of the membrane; sequence TANVVQLKRAALILADNDAKNANEKNKTY.

This sequence belongs to the CDP-alcohol phosphatidyltransferase class-I family. Mn(2+) is required as a cofactor. Mg(2+) serves as cofactor.

Its subcellular location is the microsome membrane. The protein resides in the endoplasmic reticulum membrane. The protein localises to the golgi apparatus membrane. It is found in the mitochondrion outer membrane. It carries out the reaction a CDP-1,2-diacyl-sn-glycerol + myo-inositol = a 1,2-diacyl-sn-glycero-3-phospho-(1D-myo-inositol) + CMP + H(+). Its function is as follows. Catalyzes the synthesis of phosphatidylinositol (PtdIns). This is CDP-diacylglycerol--inositol 3-phosphatidyltransferase from Saccharomyces cerevisiae (strain ATCC 204508 / S288c) (Baker's yeast).